The chain runs to 627 residues: (-)-beta-pinene synthase 2, chloroplastic (627 aa).

The N-terminal 51 residues, 1–51 (MDLISVLPSASKSCVCLHKPLSSSTHKLKPFCRKIRILGMPRPRKSVLMVS), are a transit peptide targeting the chloroplast. D378, D382, and D530 together coordinate Mg(2+). The DDXXD motif motif lies at 378-382 (DDMYD).

The protein belongs to the terpene synthase family. Tpsd subfamily. It depends on Mg(2+) as a cofactor. Mn(2+) serves as cofactor.

The protein resides in the plastid. It localises to the chloroplast. The catalysed reaction is (2E)-geranyl diphosphate = (1S,5S)-beta-pinene + diphosphate. It carries out the reaction (2E)-geranyl diphosphate = (1S,5S)-alpha-pinene + diphosphate. It functions in the pathway terpene metabolism; oleoresin biosynthesis. Its pathway is secondary metabolite biosynthesis; terpenoid biosynthesis. Monoterpene synthase (TPS) involved in the biosynthesis of monoterpene natural products included in conifer oleoresin secretions and volatile emissions; these compounds contribute to biotic and abiotic stress defense against herbivores and pathogens. Catalyzes the conversion of (2E)-geranyl diphosphate (GPP) to (-)-beta-pinene and, to a lower extent, to (-)-alpha-pinene. The sequence is that of (-)-beta-pinene synthase 2, chloroplastic from Pinus banksiana (Jack pine).